We begin with the raw amino-acid sequence, 188 residues long: Elongation factor P (188 aa).

This sequence belongs to the elongation factor P family.

It is found in the cytoplasm. It participates in protein biosynthesis; polypeptide chain elongation. Functionally, involved in peptide bond synthesis. Stimulates efficient translation and peptide-bond synthesis on native or reconstituted 70S ribosomes in vitro. Probably functions indirectly by altering the affinity of the ribosome for aminoacyl-tRNA, thus increasing their reactivity as acceptors for peptidyl transferase. The polypeptide is Elongation factor P (Pelodictyon phaeoclathratiforme (strain DSM 5477 / BU-1)).